Here is a 200-residue protein sequence, read N- to C-terminus: Rubrerythrin (200 aa).

In terms of domain architecture, Ferritin-like diiron spans 12–155; it reads SIKGSKTEKH…ALLAHVEDGS (144 aa). The Fe(3+) site is built by glutamate 29, glutamate 62, glutamate 103, glutamate 106, glutamate 137, histidine 140, cysteine 167, cysteine 170, cysteine 183, and cysteine 186. Residues 162-200 form the Rubredoxin-like domain; sequence EIAWQCRNCGYVITSKKAPKLCPACAHPQAYFEPMKTNY.

Homodimer. Possesses two rubredoxin-like centers and two non-sulfur oxo-bridged di-iron centers per dimer. It depends on Fe(3+) as a cofactor.

Its subcellular location is the cytoplasm. Functionally, may provide oxidative stress protection via catalytic reduction of intracellular hydrogen peroxide. This chain is Rubrerythrin (rbr), found in Porphyromonas gingivalis (strain ATCC BAA-308 / W83).